The following is a 146-amino-acid chain: Large ribosomal subunit protein uL15 (146 aa).

The disordered stretch occupies residues Met1 to Gly54. Gly residues predominate over residues Arg23–Val37.

Belongs to the universal ribosomal protein uL15 family. Part of the 50S ribosomal subunit.

Its function is as follows. Binds to the 23S rRNA. In Acinetobacter baylyi (strain ATCC 33305 / BD413 / ADP1), this protein is Large ribosomal subunit protein uL15.